We begin with the raw amino-acid sequence, 660 residues long: Translation factor GUF1, mitochondrial (660 aa).

A mitochondrion-targeting transit peptide spans 1-42; the sequence is MRSCVRTASSVLQSWRAHTVLRNGCPLPSRTLERLPRLARSY. A tr-type G domain is found at 62–242; sequence ERYRNFCIVA…AVVEKIPAPV (181 aa). Residues 71-78, 135-139, and 189-192 each bind GTP; these read AHVDHGKS, DTPGH, and NKVD.

It belongs to the TRAFAC class translation factor GTPase superfamily. Classic translation factor GTPase family. LepA subfamily.

It localises to the mitochondrion inner membrane. It carries out the reaction GTP + H2O = GDP + phosphate + H(+). In terms of biological role, promotes mitochondrial protein synthesis. May act as a fidelity factor of the translation reaction, by catalyzing a one-codon backward translocation of tRNAs on improperly translocated ribosomes. Binds to mitochondrial ribosomes in a GTP-dependent manner. The polypeptide is Translation factor GUF1, mitochondrial (Phaeosphaeria nodorum (strain SN15 / ATCC MYA-4574 / FGSC 10173) (Glume blotch fungus)).